Reading from the N-terminus, the 339-residue chain is DNA-directed RNA polymerase subunit alpha (339 aa).

The interval 1–233 (MVREEVAGST…DLFLPFLHAE (233 aa)) is alpha N-terminal domain (alpha-NTD). The tract at residues 264 to 339 (KKGIPLNCIF…IDLLKNKLSF (76 aa)) is alpha C-terminal domain (alpha-CTD).

Belongs to the RNA polymerase alpha chain family. In terms of assembly, in plastids the minimal PEP RNA polymerase catalytic core is composed of four subunits: alpha, beta, beta', and beta''. When a (nuclear-encoded) sigma factor is associated with the core the holoenzyme is formed, which can initiate transcription.

It is found in the plastid. Its subcellular location is the chloroplast. The catalysed reaction is RNA(n) + a ribonucleoside 5'-triphosphate = RNA(n+1) + diphosphate. Functionally, DNA-dependent RNA polymerase catalyzes the transcription of DNA into RNA using the four ribonucleoside triphosphates as substrates. The protein is DNA-directed RNA polymerase subunit alpha of Thinopyrum elongatum (Tall wheatgrass).